A 541-amino-acid polypeptide reads, in one-letter code: Long-chain-fatty-acid--CoA ligase (541 aa).

Residue T184 participates in Mg(2+) binding. Positions 231 and 234 each coordinate ATP. Tetradecanoyl-AMP is bound by residues G302, Q322, G323, and T327. ATP is bound by residues G323 and T327. Residue E328 coordinates Mg(2+). D418, K435, K439, and W444 together coordinate ATP. Residues D418, K435, and K439 each contribute to the tetradecanoyl-AMP site.

It belongs to the ATP-dependent AMP-binding enzyme family. In terms of assembly, forms a domain swapped homodimer. Mg(2+) is required as a cofactor.

The enzyme catalyses a long-chain fatty acid + ATP + CoA = a long-chain fatty acyl-CoA + AMP + diphosphate. It carries out the reaction tetradecanoate + ATP + CoA = tetradecanoyl-CoA + AMP + diphosphate. It catalyses the reaction hexadecanoate + ATP + CoA = hexadecanoyl-CoA + AMP + diphosphate. It participates in lipid metabolism; fatty acid metabolism. In terms of biological role, catalyzes the esterification of a number of long chain fatty acids with CoA, resulting in the formation of long-chain fatty acyl-CoA. Myristate (C14) is the most efficiently processed fatty acid, followed by palmitate (C16). Also catalyzes the esterification of stearate (C18) and laurate (C12), but at lower efficiency. Does not catalyze the esterification of the unsaturated fatty acids mysteroleic and palmitoleic acids in vitro. The chain is Long-chain-fatty-acid--CoA ligase from Thermus thermophilus (strain ATCC 27634 / DSM 579 / HB8).